The sequence spans 452 residues: Probable splicing factor, arginine/serine-rich 7 (452 aa).

RRM domains follow at residues 10 to 91 (KILH…YPNP) and 163 to 240 (RTVY…HSRV). Residues 258-452 (EEAIRMGRNG…GNGDVVMASE (195 aa)) are disordered. Residues 259–272 (EAIRMGRNGDDRDR) show a composition bias toward basic and acidic residues. Residues 273–290 (RRSRSPRRRRSPSPRRRR) are compositionally biased toward basic residues. Basic and acidic residues predominate over residues 291 to 305 (DSRDRDRDRDRDRRR). Basic residues-rich tracts occupy residues 323-335 (KRSRSRDRKRRSR), 345-360 (KRSRSRDRRRRSKSRD), and 370-382 (SKDRKRDKKRSRS). Over residues 383-421 (RSPEKRRDKEDRKTEKKENENESSLREKLLEKKAARKDS) the composition is skewed to basic and acidic residues.

It belongs to the splicing factor SR family. In terms of processing, extensively phosphorylated on serine residues in the RS domain.

The protein localises to the nucleus. In Caenorhabditis elegans, this protein is Probable splicing factor, arginine/serine-rich 7 (rsp-7).